A 147-amino-acid polypeptide reads, in one-letter code: Myoglobin (147 aa).

The Globin domain occupies 2–141; sequence ADFDMVLKCW…IIADMEADYK (140 aa). Histidine 60 lines the nitrite pocket. Residue histidine 60 coordinates O2. Histidine 89 lines the heme b pocket.

Belongs to the globin family. Monomeric.

It localises to the cytoplasm. Its subcellular location is the sarcoplasm. It carries out the reaction Fe(III)-heme b-[protein] + nitric oxide + H2O = Fe(II)-heme b-[protein] + nitrite + 2 H(+). The enzyme catalyses H2O2 + AH2 = A + 2 H2O. Monomeric heme protein which primary function is to store oxygen and facilitate its diffusion within muscle tissues. Reversibly binds oxygen through a pentacoordinated heme iron and enables its timely and efficient release as needed during periods of heightened demand. Depending on the oxidative conditions of tissues and cells, and in addition to its ability to bind oxygen, it also has a nitrite reductase activity whereby it regulates the production of bioactive nitric oxide. Under stress conditions, like hypoxia and anoxia, it also protects cells against reactive oxygen species thanks to its pseudoperoxidase activity. In Notothenia neglecta (Yellowbelly rockcod), this protein is Myoglobin (mb).